A 219-amino-acid polypeptide reads, in one-letter code: Probable oxidoreductase virH (219 aa).

The protein belongs to the oxidoreductase OpS7 family.

Its pathway is secondary metabolite biosynthesis. Probable oxidoreductase; part of the gene cluster that mediates the biosynthesis of virensols and trichoxide, fungal natural products that contain or are derived from a salicylaldehyde core. The pathway begins with the synthesis of the reduced chain in virensol C by the highly reducing polyketide synthase virA via condensation of one acetate and 8 malonate units. VirA has interesting programming rules since the first 2 ketides are fully reduced, the 3 following ketides undergo beta-dehydration, and the last 3 ketides are only reduced to beta-hydroxys to yield the trihydroxy portion. The production of aldehyde virensol C by virA alone is surprising, since virA does not contain a reductase (R) domain that is typically associated with reductive product release in HRPKS. The cupin-domain enzyme virC is involved in enhancing virA product turnover. The short-chain dehydrogenase virB then oxidizes the C-7 alcohol of virensol C to a ketone, yielding virensol D. Virensol D is further transformed to salicylaldehyde 5-deoxyaurocitrin by the short-chain dehydrogenase virD. VirD catalyzes the dehydrogenation of C-3 to form the beta-ketone aldehyde, which is followed by the generation of the nucleophilic C-2 that is required for the intramolecular aldol condensation between C-2 and C-7, itself followed by dehydration and aromatization which leads to salicylaldehyde 5-deoxyaurocitrin. While the dehydrogenation of virensol D is definitely catalyzed by virD, the aldol condensation and dehydration may be uncatalyzed or assisted by virD. The short chain dehydrogenase virG then converts salicylaldehyde 5-deoxyaurocitrin into virensol B which is further hydroxylated by the cytochrome P450 monooxygenase virE to yield the hydroquinone virensol A. VirI then may oxidize virensol A to form the quinone, while virH performs the epoxidation. Finally, the two remaining short-chain dehydrogenases, virK and virL, are probably responsible for reducing the ketones to the corresponding alcohols to furnish the epoxycyclohexanol structure in trichoxide. The chain is Probable oxidoreductase virH from Hypocrea virens (strain Gv29-8 / FGSC 10586) (Gliocladium virens).